We begin with the raw amino-acid sequence, 220 residues long: MTQETQQLTLALSKGRIFEETLPLLEAAGIKVTEDPETSRKLILQTNDANVRVIIVRASDVPTYVQYGAADFGVAGKDVLLEHGGEGLYQPIDLNIANCRMSVAVKDGFDYESAVQQGARLRVVTKYVQTAREHFAAKGVHVDLIKLYGSMELGPLVGLADAIVDLVSTGSTLRANHLVEVERIMDISSRLVVNKAALKLKRERLQPILEAFEKASKRSS.

This sequence belongs to the ATP phosphoribosyltransferase family. Short subfamily. Heteromultimer composed of HisG and HisZ subunits.

Its subcellular location is the cytoplasm. The enzyme catalyses 1-(5-phospho-beta-D-ribosyl)-ATP + diphosphate = 5-phospho-alpha-D-ribose 1-diphosphate + ATP. The protein operates within amino-acid biosynthesis; L-histidine biosynthesis; L-histidine from 5-phospho-alpha-D-ribose 1-diphosphate: step 1/9. Functionally, catalyzes the condensation of ATP and 5-phosphoribose 1-diphosphate to form N'-(5'-phosphoribosyl)-ATP (PR-ATP). Has a crucial role in the pathway because the rate of histidine biosynthesis seems to be controlled primarily by regulation of HisG enzymatic activity. This Janthinobacterium sp. (strain Marseille) (Minibacterium massiliensis) protein is ATP phosphoribosyltransferase.